We begin with the raw amino-acid sequence, 168 residues long: MPRSRINGNFIDQTFSIVANILLRVIPTTSGEKEAFTYYRDGMSAQSEGNYAEALQNYYEAMRLEIDPYDRSYILYNIGLIHTSNGEHTKALEYYFRALERNPFLPQAFNNMAVICHYRGEQAIQQGDSEIAEAWFDQAAEYWKQAIALTPGNYIEAHNWLKITRRFE.

3 TPR repeats span residues 35-68, 72-105, and 120-153; these read AFTY…EIDP, SYIL…NPFL, and GEQA…TPGN.

The protein belongs to the Ycf3 family.

The protein localises to the plastid. Its subcellular location is the chloroplast thylakoid membrane. Functionally, essential for the assembly of the photosystem I (PSI) complex. May act as a chaperone-like factor to guide the assembly of the PSI subunits. The chain is Photosystem I assembly protein Ycf3 from Atropa belladonna (Belladonna).